Reading from the N-terminus, the 332-residue chain is Biotin synthase (332 aa).

A Radical SAM core domain is found at 53-282; it reads HFGKKVKLNM…TKEIRISGGR (230 aa). 3 residues coordinate [4Fe-4S] cluster: Cys71, Cys75, and Cys78. Residues Cys115, Cys147, Cys207, and Arg277 each contribute to the [2Fe-2S] cluster site.

The protein belongs to the radical SAM superfamily. Biotin synthase family. As to quaternary structure, homodimer. The cofactor is [4Fe-4S] cluster. It depends on [2Fe-2S] cluster as a cofactor.

It catalyses the reaction (4R,5S)-dethiobiotin + (sulfur carrier)-SH + 2 reduced [2Fe-2S]-[ferredoxin] + 2 S-adenosyl-L-methionine = (sulfur carrier)-H + biotin + 2 5'-deoxyadenosine + 2 L-methionine + 2 oxidized [2Fe-2S]-[ferredoxin]. It participates in cofactor biosynthesis; biotin biosynthesis; biotin from 7,8-diaminononanoate: step 2/2. In terms of biological role, catalyzes the conversion of dethiobiotin (DTB) to biotin by the insertion of a sulfur atom into dethiobiotin via a radical-based mechanism. This chain is Biotin synthase, found in Bacillus mycoides (strain KBAB4) (Bacillus weihenstephanensis).